The chain runs to 195 residues: Ribosomal RNA small subunit methyltransferase G (195 aa).

S-adenosyl-L-methionine-binding positions include Gly-60, Leu-65, 114–115, and Arg-128; that span reads IE.

This sequence belongs to the methyltransferase superfamily. RNA methyltransferase RsmG family.

The protein localises to the cytoplasm. The enzyme catalyses guanosine(527) in 16S rRNA + S-adenosyl-L-methionine = N(7)-methylguanosine(527) in 16S rRNA + S-adenosyl-L-homocysteine. Specifically methylates the N7 position of guanine in position 527 of 16S rRNA. In Dinoroseobacter shibae (strain DSM 16493 / NCIMB 14021 / DFL 12), this protein is Ribosomal RNA small subunit methyltransferase G.